The chain runs to 283 residues: Myeloid differentiation primary response protein MyD88-A (283 aa).

The Death domain maps to 27–105 (RLCLYLNPDA…DILTDLGPLI (79 aa)). The segment at 106 to 143 (EADCMKYLEKKHVPLPIQDDKVDSSEQYRITKSDDPYG) is intermediate domain. The TIR domain occupies 147 to 281 (ETFDAFICYC…WFWDKLAKAL (135 aa)).

It localises to the cytoplasm. Its function is as follows. Adapter protein involved in the Toll-like receptor and IL-1 receptor signaling pathway in the innate immune response. Activates expression of target genes in the Spemann organizer region during early embryonic development. Is required for normal axis formation. This Xenopus laevis (African clawed frog) protein is Myeloid differentiation primary response protein MyD88-A (myd88-a).